Consider the following 537-residue polypeptide: CTP synthase (537 aa).

An amidoligase domain region spans residues Met1–Leu268. Ser15 provides a ligand contact to CTP. Ser15 is a UTP binding site. Ser16–Ile21 serves as a coordination point for ATP. An L-glutamine-binding site is contributed by Tyr56. ATP is bound at residue Asp73. Mg(2+) contacts are provided by Asp73 and Glu143. Residues Asp150 to Glu152, Lys189 to Gln194, and Lys225 contribute to the CTP site. UTP contacts are provided by residues Lys189–Gln194 and Lys225. The Glutamine amidotransferase type-1 domain maps to Asn296 to Asn537. Gly357 is a binding site for L-glutamine. Cys384 acts as the Nucleophile; for glutamine hydrolysis in catalysis. Residues Leu385 to Gln388, Glu408, and Arg465 contribute to the L-glutamine site. Residues His510 and Glu512 contribute to the active site.

This sequence belongs to the CTP synthase family. Homotetramer.

The catalysed reaction is UTP + L-glutamine + ATP + H2O = CTP + L-glutamate + ADP + phosphate + 2 H(+). It carries out the reaction L-glutamine + H2O = L-glutamate + NH4(+). It catalyses the reaction UTP + NH4(+) + ATP = CTP + ADP + phosphate + 2 H(+). Its pathway is pyrimidine metabolism; CTP biosynthesis via de novo pathway; CTP from UDP: step 2/2. Its activity is regulated as follows. Allosterically activated by GTP, when glutamine is the substrate; GTP has no effect on the reaction when ammonia is the substrate. The allosteric effector GTP functions by stabilizing the protein conformation that binds the tetrahedral intermediate(s) formed during glutamine hydrolysis. Inhibited by the product CTP, via allosteric rather than competitive inhibition. In terms of biological role, catalyzes the ATP-dependent amination of UTP to CTP with either L-glutamine or ammonia as the source of nitrogen. Regulates intracellular CTP levels through interactions with the four ribonucleotide triphosphates. This chain is CTP synthase, found in Bacteroides thetaiotaomicron (strain ATCC 29148 / DSM 2079 / JCM 5827 / CCUG 10774 / NCTC 10582 / VPI-5482 / E50).